Reading from the N-terminus, the 298-residue chain is NAD kinase (298 aa).

Asp-80 (proton acceptor) is an active-site residue. Residues 80 to 81, 154 to 155, Arg-182, Asp-184, 195 to 200, Ala-219, and Gln-253 each bind NAD(+); these read DG, ND, and TAYALS.

Belongs to the NAD kinase family. Requires a divalent metal cation as cofactor.

It localises to the cytoplasm. It carries out the reaction NAD(+) + ATP = ADP + NADP(+) + H(+). Functionally, involved in the regulation of the intracellular balance of NAD and NADP, and is a key enzyme in the biosynthesis of NADP. Catalyzes specifically the phosphorylation on 2'-hydroxyl of the adenosine moiety of NAD to yield NADP. The protein is NAD kinase of Acidovorax ebreus (strain TPSY) (Diaphorobacter sp. (strain TPSY)).